The following is a 455-amino-acid chain: Enolase (455 aa).

(2R)-2-phosphoglycerate is bound at residue Gln166. The Proton donor role is filled by Glu208. Positions 249, 311, and 338 each coordinate Mg(2+). Positions 363, 392, 393, and 414 each coordinate (2R)-2-phosphoglycerate. The active-site Proton acceptor is Lys363.

Belongs to the enolase family. Mg(2+) serves as cofactor.

It localises to the cytoplasm. The protein resides in the secreted. The protein localises to the cell surface. The enzyme catalyses (2R)-2-phosphoglycerate = phosphoenolpyruvate + H2O. Its pathway is carbohydrate degradation; glycolysis; pyruvate from D-glyceraldehyde 3-phosphate: step 4/5. In terms of biological role, catalyzes the reversible conversion of 2-phosphoglycerate (2-PG) into phosphoenolpyruvate (PEP). It is essential for the degradation of carbohydrates via glycolysis. The protein is Enolase of Mycoplasma mobile (strain ATCC 43663 / 163K / NCTC 11711) (Mesomycoplasma mobile).